Consider the following 213-residue polypeptide: E3 ubiquitin-protein ligase NleG8 (213 aa).

Positions 136–189 (CPITLCVPETGVFVKNARCSKVCSLYDISALTEMLRRNASHPLSREAFTPGMIV) are RING/U-box domain. The PDZ-binding motif motif lies at 211 to 213 (TRL).

This sequence belongs to the NleG E3 ligase family. As to quaternary structure, interacts with host GOPC (human protein).

The protein resides in the secreted. It localises to the host cytoplasm. It carries out the reaction S-ubiquitinyl-[E2 ubiquitin-conjugating enzyme]-L-cysteine + [acceptor protein]-L-lysine = [E2 ubiquitin-conjugating enzyme]-L-cysteine + N(6)-ubiquitinyl-[acceptor protein]-L-lysine.. Functionally, effector proteins function to alter host cell physiology and promote bacterial survival in host tissues. This protein is an E3 ubiquitin-protein ligase that probably interferes with the host's ubiquitination pathway and targets host proteins for proteasomal degradation. Mice infected with a strain of bacteria deleted for this gene had an increased survival rate. Can be ubiquitinylated, and ubiquitinate ubiquitin, giving rise to polyubiquitin chains (in vitro). In Citrobacter rodentium, this protein is E3 ubiquitin-protein ligase NleG8.